We begin with the raw amino-acid sequence, 540 residues long: Membrane protein insertase YidC (540 aa).

Residues 6–26 (NILLIALALVSFLLFQQWQVA) traverse the membrane as a helical segment. A compositionally biased stretch (low complexity) spans 36 to 47 (QAQSSSSLPAPS). Positions 36–63 (QAQSSSSLPAPSFADELDPVPGQQQASA) are disordered. Helical transmembrane passes span 342–362 (AFIQ…TFIV), 417–437 (LGGC…YWAL), 455–475 (LSAQ…MFLI), and 496–516 (PVMF…YWLV).

Belongs to the OXA1/ALB3/YidC family. Type 1 subfamily. Interacts with the Sec translocase complex via SecD. Specifically interacts with transmembrane segments of nascent integral membrane proteins during membrane integration.

It localises to the cell inner membrane. Required for the insertion and/or proper folding and/or complex formation of integral membrane proteins into the membrane. Involved in integration of membrane proteins that insert both dependently and independently of the Sec translocase complex, as well as at least some lipoproteins. Aids folding of multispanning membrane proteins. This chain is Membrane protein insertase YidC, found in Vibrio parahaemolyticus serotype O3:K6 (strain RIMD 2210633).